We begin with the raw amino-acid sequence, 376 residues long: Chaperone protein DnaJ (376 aa).

The 66-residue stretch at 5-70 folds into the J domain; sequence DYYEVLGVAR…EKRARYDRFG (66 aa). The CR-type zinc finger occupies 137-215; that stretch reads GDEVTLRLPK…CKGSGQTQQV (79 aa). 8 residues coordinate Zn(2+): Cys-150, Cys-153, Cys-167, Cys-170, Cys-189, Cys-192, Cys-203, and Cys-206. CXXCXGXG motif repeat units follow at residues 150–157, 167–174, 189–196, and 203–210; these read CDECGGSG, CRHCGGAG, CPVCRGEG, and CPKCKGSG.

This sequence belongs to the DnaJ family. In terms of assembly, homodimer. Zn(2+) serves as cofactor.

The protein localises to the cytoplasm. Functionally, participates actively in the response to hyperosmotic and heat shock by preventing the aggregation of stress-denatured proteins and by disaggregating proteins, also in an autonomous, DnaK-independent fashion. Unfolded proteins bind initially to DnaJ; upon interaction with the DnaJ-bound protein, DnaK hydrolyzes its bound ATP, resulting in the formation of a stable complex. GrpE releases ADP from DnaK; ATP binding to DnaK triggers the release of the substrate protein, thus completing the reaction cycle. Several rounds of ATP-dependent interactions between DnaJ, DnaK and GrpE are required for fully efficient folding. Also involved, together with DnaK and GrpE, in the DNA replication of plasmids through activation of initiation proteins. This chain is Chaperone protein DnaJ, found in Nitratidesulfovibrio vulgaris (strain ATCC 29579 / DSM 644 / CCUG 34227 / NCIMB 8303 / VKM B-1760 / Hildenborough) (Desulfovibrio vulgaris).